The following is a 221-amino-acid chain: MRLILLGAPGAGKGTQAKFICEKFGIPQISTGDMLRAAVKAGTPLGIEAKKVMDAGGLVSDDIIIGLVKDRLKQPDCEKGYLFDGFPRTIPQAEAMKEAGVAIDYVLEIDVPFDAIIERMSGRRVHVASGRTYHVKFNPPKADMVDDETGEALIQRDDDKEETVRKRLDVYSQQTRPLVDYYSNWAANGDASAKVSPPKYRKIAGLGEVDKITASVFDALK.

Position 10–15 (10–15 (GAGKGT)) interacts with ATP. Residues 30 to 59 (STGDMLRAAVKAGTPLGIEAKKVMDAGGLV) form an NMP region. AMP contacts are provided by residues Thr31, Arg36, 57–59 (GLV), 85–88 (GFPR), and Gln92. The segment at 122–159 (GRRVHVASGRTYHVKFNPPKADMVDDETGEALIQRDDD) is LID. ATP contacts are provided by residues Arg123 and 132-133 (TY). The AMP site is built by Arg156 and Arg167. Gly207 contacts ATP.

This sequence belongs to the adenylate kinase family. In terms of assembly, monomer.

It is found in the cytoplasm. It carries out the reaction AMP + ATP = 2 ADP. It functions in the pathway purine metabolism; AMP biosynthesis via salvage pathway; AMP from ADP: step 1/1. Catalyzes the reversible transfer of the terminal phosphate group between ATP and AMP. Plays an important role in cellular energy homeostasis and in adenine nucleotide metabolism. In Cupriavidus metallidurans (strain ATCC 43123 / DSM 2839 / NBRC 102507 / CH34) (Ralstonia metallidurans), this protein is Adenylate kinase.